The sequence spans 350 residues: MSIPTMQWAQVAEKVGGPLVYKQIPVPKPGPDQILVKIRYSGVCHTDLHAMMGHWPIPVKMPLVGGHEGAGIVVAKGELVHEFEIGDQAGIKWLNGSCGECEFCRQSDDPLCARAQLSGYTVDGTFQQYALGKASHASKIPAGVPLDAAAPVLCAGITVYKGLKEAGVRPGQTVAIVGAGGGLGSLAQQYAKAMGIRVVAVDGGDEKRAMCESLGTETYVDFTKSKDLVADVKAATPDGLGAHAVILLAVSEKPFQQATEYVRSRGTIVAIGLPPDAYLKAPVINTVVRMITIKGSYVGNRQDGVEALDFFARGLIKAPFKTAPLKDLPKIYELMEQGRIAGRYVLEMPE.

Residues C44, T46, H67, C98, C101, C104, C112, and C154 each coordinate Zn(2+). Residues T46 and H67 each contribute to the an alcohol site. T46 serves as a coordination point for NAD(+). NAD(+) is bound by residues 178-182 (GAGGG), D202, K207, 271-273 (IGL), and R343.

Belongs to the zinc-containing alcohol dehydrogenase family. In terms of assembly, homotetramer. The cofactor is Zn(2+).

It localises to the cytoplasm. It is found in the secreted. It carries out the reaction a primary alcohol + NAD(+) = an aldehyde + NADH + H(+). It catalyses the reaction a secondary alcohol + NAD(+) = a ketone + NADH + H(+). The chain is Alcohol dehydrogenase 1 (alcA) from Emericella nidulans (strain FGSC A4 / ATCC 38163 / CBS 112.46 / NRRL 194 / M139) (Aspergillus nidulans).